Here is a 347-residue protein sequence, read N- to C-terminus: SUMO-activating enzyme subunit 1 (347 aa).

This sequence belongs to the ubiquitin-activating E1 family. As to quaternary structure, heterodimer of sae1 and uba2/sae2. The heterodimer corresponds to the two domains that are encoded on a single polypeptide chain in ubiquitin-activating enzyme E1. Interacts with ube2i.

The protein localises to the nucleus. It functions in the pathway protein modification; protein sumoylation. Functionally, the heterodimer acts as an E1 ligase for sumo1, sumo2, and sumo3. It mediates ATP-dependent activation of sumo proteins followed by formation of a thioester bond between a sumo protein and a conserved active site cysteine residue on uba2/sae2. The chain is SUMO-activating enzyme subunit 1 (sae1) from Xenopus tropicalis (Western clawed frog).